Consider the following 312-residue polypeptide: Olfactory receptor 51A7 (312 aa).

Residues 1–25 lie on the Extracellular side of the membrane; the sequence is MSVLNNSEVKLFLLIGIPGLEHAHI. Asn5 carries N-linked (GlcNAc...) asparagine glycosylation. The helical transmembrane segment at 26 to 46 threads the bilayer; sequence WFSIPICLMYLLAIMGNCTIL. Residues 47-54 are Cytoplasmic-facing; that stretch reads FIIKTEPS. The helical transmembrane segment at 55–75 threads the bilayer; sequence LHEPMYYFLAMLAVSDMGLSL. The Extracellular portion of the chain corresponds to 76 to 99; it reads SSLPTMLRVFLFNAMGISPNACFA. A disulfide bond links Cys97 and Cys189. The chain crosses the membrane as a helical span at residues 100-120; that stretch reads QEFFIHGFTVMESSVLLIMSL. Topologically, residues 121 to 139 are cytoplasmic; that stretch reads DRFLAIHNPLRYSSILTSN. The helical transmembrane segment at 140–160 threads the bilayer; that stretch reads RVAKMGLILAIRSILLVIPFP. The Extracellular segment spans residues 161–196; that stretch reads FTLRRLKYCQKNLLSHSYCLHQDTMKLACSDNKTNV. N-linked (GlcNAc...) asparagine glycosylation is present at Asn192. The helical transmembrane segment at 197-216 threads the bilayer; the sequence is IYGFFIALCTMLDLALIVLS. Over 217–236 the chain is Cytoplasmic; sequence YVLILKTILSIASLAERLKA. A helical membrane pass occupies residues 237 to 257; the sequence is LNTCVSHICAVLTFYVPIITL. Over 258 to 272 the chain is Extracellular; that stretch reads AAMHHFAKHKSPLVV. The helical transmembrane segment at 273–293 threads the bilayer; the sequence is ILIADMFLLVPPLMNPIVYCV. Topologically, residues 294 to 312 are cytoplasmic; sequence KTRQIWEKILGKLLNVCGR.

The protein belongs to the G-protein coupled receptor 1 family.

The protein localises to the cell membrane. Functionally, odorant receptor. This is Olfactory receptor 51A7 (OR51A7) from Homo sapiens (Human).